A 544-amino-acid chain; its full sequence is NAD(P)H-quinone oxidoreductase chain 4 (544 aa).

14 helical membrane-spanning segments follow: residues 29 to 49 (FPWLTTAILLPIAASLAIPLV), 60 to 80 (WYALGVSLTTFLITVGAYLNG), 115 to 135 (LILLTSFITTLACLAAWPVTF), 139 to 159 (LFFFLLLAMDGGQIAVFAVQD), 161 to 181 (LLFFLAWELELIPVYLLLAIW), 193 to 213 (FILYTAVSSLFILLVALAMAF), 234 to 254 (GFQALCYAGLLIAFGVKLPIV), 268 to 288 (TAPVHMLLAGILLKMGGYALF), 302 to 322 (FAPLLVVLGVVNIIYAALTSF), 339 to 359 (MGFVLIGIGSFSPLAASGAML), 360 to 380 (QMISHGLIGASLFFLVGATYD), 400 to 422 (MFAMWTACSLASLALPGMSGFVS), 442 to 462 (IVIDGAAAIGVILTPIYLLSM), and 488 to 508 (IYIISCLLVPIIGIGLYPKLV).

The protein belongs to the complex I subunit 4 family.

It localises to the cellular thylakoid membrane. The enzyme catalyses a plastoquinone + NADH + (n+1) H(+)(in) = a plastoquinol + NAD(+) + n H(+)(out). The catalysed reaction is a plastoquinone + NADPH + (n+1) H(+)(in) = a plastoquinol + NADP(+) + n H(+)(out). Functionally, NDH-1 shuttles electrons from NAD(P)H, via FMN and iron-sulfur (Fe-S) centers, to quinones in the respiratory chain. The immediate electron acceptor for the enzyme in this species is believed to be plastoquinone. Couples the redox reaction to proton translocation (for every two electrons transferred, four hydrogen ions are translocated across the cytoplasmic membrane), and thus conserves the redox energy in a proton gradient. The protein is NAD(P)H-quinone oxidoreductase chain 4 of Synechococcus sp. (strain RCC307).